The following is a 374-amino-acid chain: Ribosomal RNA large subunit methyltransferase G (374 aa).

This sequence belongs to the methyltransferase superfamily. RlmG family.

It is found in the cytoplasm. It carries out the reaction guanosine(1835) in 23S rRNA + S-adenosyl-L-methionine = N(2)-methylguanosine(1835) in 23S rRNA + S-adenosyl-L-homocysteine + H(+). Its function is as follows. Specifically methylates the guanine in position 1835 (m2G1835) of 23S rRNA. This Pseudomonas putida (strain ATCC 47054 / DSM 6125 / CFBP 8728 / NCIMB 11950 / KT2440) protein is Ribosomal RNA large subunit methyltransferase G.